Reading from the N-terminus, the 144-residue chain is Nucleoside diphosphate kinase (144 aa).

6 residues coordinate ATP: Lys-5, Phe-53, Arg-81, Thr-87, Arg-98, and Asn-108. The Pros-phosphohistidine intermediate role is filled by His-111.

The protein belongs to the NDK family. The cofactor is Mg(2+).

It catalyses the reaction a 2'-deoxyribonucleoside 5'-diphosphate + ATP = a 2'-deoxyribonucleoside 5'-triphosphate + ADP. It carries out the reaction a ribonucleoside 5'-diphosphate + ATP = a ribonucleoside 5'-triphosphate + ADP. In terms of biological role, major role in the synthesis of nucleoside triphosphates other than ATP. The ATP gamma phosphate is transferred to the NDP beta phosphate via a ping-pong mechanism, using a phosphorylated active-site intermediate. In Solanum lycopersicum (Tomato), this protein is Nucleoside diphosphate kinase.